Here is a 797-residue protein sequence, read N- to C-terminus: Outer membrane protein assembly factor BamA (797 aa).

The N-terminal stretch at 1–19 (MKKLLIASLLFGTTTTVFA) is a signal peptide. 5 POTRA domains span residues 22–89 (FVAK…VVAK), 90–170 (SIIS…INED), 173–259 (AKLA…VNEG), 262–341 (YDLR…VDAG), and 344–418 (LTVR…VKER).

It belongs to the BamA family. As to quaternary structure, part of the Bam complex.

The protein localises to the cell outer membrane. In terms of biological role, part of the outer membrane protein assembly complex, which is involved in assembly and insertion of beta-barrel proteins into the outer membrane. The protein is Outer membrane protein assembly factor BamA of Haemophilus influenzae.